Here is a 433-residue protein sequence, read N- to C-terminus: Gamma-glutamyl phosphate reductase (433 aa).

The protein belongs to the gamma-glutamyl phosphate reductase family.

The protein localises to the cytoplasm. It carries out the reaction L-glutamate 5-semialdehyde + phosphate + NADP(+) = L-glutamyl 5-phosphate + NADPH + H(+). It participates in amino-acid biosynthesis; L-proline biosynthesis; L-glutamate 5-semialdehyde from L-glutamate: step 2/2. Functionally, catalyzes the NADPH-dependent reduction of L-glutamate 5-phosphate into L-glutamate 5-semialdehyde and phosphate. The product spontaneously undergoes cyclization to form 1-pyrroline-5-carboxylate. The sequence is that of Gamma-glutamyl phosphate reductase from Cyanothece sp. (strain PCC 7425 / ATCC 29141).